A 317-amino-acid polypeptide reads, in one-letter code: MKTIIISDFDETITRVDTICTIAKLPYLLNPRLKPEWGHFTKTYMDGYHKYKYNGTRSLPLLSSGVPTIISQSNFNKLFADELKYQNHNRVVELNSVNEITKQQIFKSISLDQMKTFARDQNHEDCLLRDGFKTFCSSVVKNFESDFYVLSINWSKEFIHEVIGDRRLKNSHIFCNDLKKVSDKCSQSYNGEFDCRLLTGSDKVKILGEILDKIDSGCNKEGNSCSYWYIGDSETDLLSILHPSTNGVLLINPQENPSKFIKITEKIIGIPKDKISSFEADNGPAWLQFCEKEGGKGAYLVKSWDSLKDLIMQVTKM.

It belongs to the CTO1 family.

Protein required for cold tolerance. Plays a role in the regulation of phosphate uptake. In Saccharomyces cerevisiae (strain ATCC 204508 / S288c) (Baker's yeast), this protein is Cold tolerance protein 1.